We begin with the raw amino-acid sequence, 444 residues long: N-succinylarginine dihydrolase (444 aa).

Residues 19–28, asparagine 110, and 137–138 each bind substrate; these read AGLSFGNVAS and HR. Residue glutamate 174 is part of the active site. Residue arginine 214 coordinates substrate. Residue histidine 250 is part of the active site. 2 residues coordinate substrate: aspartate 252 and asparagine 362. Catalysis depends on cysteine 368, which acts as the Nucleophile.

It belongs to the succinylarginine dihydrolase family. Homodimer.

The catalysed reaction is N(2)-succinyl-L-arginine + 2 H2O + 2 H(+) = N(2)-succinyl-L-ornithine + 2 NH4(+) + CO2. The protein operates within amino-acid degradation; L-arginine degradation via AST pathway; L-glutamate and succinate from L-arginine: step 2/5. In terms of biological role, catalyzes the hydrolysis of N(2)-succinylarginine into N(2)-succinylornithine, ammonia and CO(2). This chain is N-succinylarginine dihydrolase, found in Shewanella putrefaciens (strain CN-32 / ATCC BAA-453).